Reading from the N-terminus, the 268-residue chain is MVSWIISRMVVLAFGTLYPAYSSYKAVKTKNVKEYVKWMMYWIVFALFTTAETITDMLLSWFPFYFELKIAFVIWLLSPYTKGSSVLYRKFVHPTLSNKEREIDEYITQAKDRSYDTMMRFGRRGLNIAATAAVTAATKGQGVLSEKLRSFSMQDLTLIQNEDELQLEGGDDTHTAATLPRAKTATRTVRATPVPADTESQHSSRSDDQSDSRTEHSDEDAADKAPKRIAITRAAKKPAAAKTEQTTKTVKKAPKKKPTTANNVAESP.

2 helical membrane passes run 1–21 (MVSW…YPAY) and 35–55 (YVKW…ETIT). The interval 170 to 268 (GDDTHTAATL…TTANNVAESP (99 aa)) is disordered. The segment covering 180-196 (PRAKTATRTVRATPVPA) has biased composition (low complexity). Basic and acidic residues predominate over residues 199-216 (ESQHSSRSDDQSDSRTEH). Residues 228–248 (RIAITRAAKKPAAAKTEQTTK) show a composition bias toward low complexity. A compositionally biased stretch (basic residues) spans 249-258 (TVKKAPKKKP).

This sequence belongs to the DP1 family. In terms of assembly, interacts with odorant receptor proteins.

It localises to the membrane. In terms of biological role, may enhance the cell surface expression of odorant receptors. This Danio rerio (Zebrafish) protein is Receptor expression-enhancing protein 2 (reep2).